Here is a 365-residue protein sequence, read N- to C-terminus: Protein RecA (365 aa).

An ATP-binding site is contributed by 81-88 (GPESSGKT).

It belongs to the RecA family.

Its subcellular location is the cytoplasm. In terms of biological role, can catalyze the hydrolysis of ATP in the presence of single-stranded DNA, the ATP-dependent uptake of single-stranded DNA by duplex DNA, and the ATP-dependent hybridization of homologous single-stranded DNAs. It interacts with LexA causing its activation and leading to its autocatalytic cleavage. The polypeptide is Protein RecA (Borreliella burgdorferi (strain ATCC 35210 / DSM 4680 / CIP 102532 / B31) (Borrelia burgdorferi)).